The following is an 810-amino-acid chain: Probable inorganic carbon transporter subunit DabA (810 aa).

Zn(2+)-binding residues include C347, D349, H509, and C524.

Belongs to the inorganic carbon transporter (TC 9.A.2) DabA family. In terms of assembly, forms a complex with DabB. Requires Zn(2+) as cofactor.

It localises to the cell inner membrane. Functionally, part of an energy-coupled inorganic carbon pump. The polypeptide is Probable inorganic carbon transporter subunit DabA (Marinomonas sp. (strain MWYL1)).